Reading from the N-terminus, the 84-residue chain is U8-theraphotoxin-Hhn1d (84 aa).

Residues 1–21 (MKVVLIVCLVWVMAMMELVSC) form the signal peptide. 5 disulfide bridges follow: Cys-23-Cys-35, Cys-29-Cys-44, Cys-34-Cys-67, Cys-54-Cys-75, and Cys-69-Cys-81.

This sequence belongs to the AVIT (prokineticin) family. Expressed by the venom gland.

The protein resides in the secreted. This Cyriopagopus hainanus (Chinese bird spider) protein is U8-theraphotoxin-Hhn1d.